Here is a 165-residue protein sequence, read N- to C-terminus: Large ribosomal subunit protein uL10 (165 aa).

Belongs to the universal ribosomal protein uL10 family. Part of the ribosomal stalk of the 50S ribosomal subunit. The N-terminus interacts with L11 and the large rRNA to form the base of the stalk. The C-terminus forms an elongated spine to which L12 dimers bind in a sequential fashion forming a multimeric L10(L12)X complex.

Forms part of the ribosomal stalk, playing a central role in the interaction of the ribosome with GTP-bound translation factors. This Pectobacterium carotovorum subsp. carotovorum (strain PC1) protein is Large ribosomal subunit protein uL10.